The sequence spans 675 residues: Pesticidal crystal protein Cry10Aa (675 aa).

This sequence belongs to the delta endotoxin family.

Functionally, promotes colloidosmotic lysis by binding to the midgut epithelial cells of mosquitos. Active on Aedes aegypti. This is Pesticidal crystal protein Cry10Aa (cry10Aa) from Bacillus thuringiensis subsp. israelensis.